The primary structure comprises 264 residues: Glutamate racemase (264 aa).

Substrate is bound by residues 9–10 (DS) and 41–42 (YG). Cysteine 72 acts as the Proton donor/acceptor in catalysis. A substrate-binding site is contributed by 73–74 (NT). Catalysis depends on cysteine 183, which acts as the Proton donor/acceptor. Substrate is bound at residue 184–185 (TH).

The protein belongs to the aspartate/glutamate racemases family.

It catalyses the reaction L-glutamate = D-glutamate. It participates in cell wall biogenesis; peptidoglycan biosynthesis. Its function is as follows. Provides the (R)-glutamate required for cell wall biosynthesis. The sequence is that of Glutamate racemase from Geobacillus kaustophilus (strain HTA426).